A 549-amino-acid chain; its full sequence is Glucose-6-phosphate isomerase (549 aa).

Catalysis depends on Glu355, which acts as the Proton donor. Residues His386 and Lys514 contribute to the active site.

The protein belongs to the GPI family.

It localises to the cytoplasm. It catalyses the reaction alpha-D-glucose 6-phosphate = beta-D-fructose 6-phosphate. Its pathway is carbohydrate biosynthesis; gluconeogenesis. It participates in carbohydrate degradation; glycolysis; D-glyceraldehyde 3-phosphate and glycerone phosphate from D-glucose: step 2/4. Catalyzes the reversible isomerization of glucose-6-phosphate to fructose-6-phosphate. This is Glucose-6-phosphate isomerase from Edwardsiella ictaluri (strain 93-146).